The sequence spans 514 residues: Glucose-1-phosphate adenylyltransferase small subunit 2, chloroplastic/amyloplastic/cytosolic (514 aa).

The N-terminal 64 residues, 1 to 64 (MAMAAAMGVA…RRRPLVFSPR (64 aa)), are a transit peptide targeting the chloroplast. The disordered stretch occupies residues 35 to 74 (RPRRPRGVASSSSSSSSAGRRRRPLVFSPRAVSDSKSSQT). A compositionally biased stretch (low complexity) spans 41-52 (GVASSSSSSSSA).

Belongs to the bacterial/plant glucose-1-phosphate adenylyltransferase family. As to quaternary structure, heterotetramer composed of two small and two large subunits. In terms of tissue distribution, expressed in leaves.

It localises to the plastid. Its subcellular location is the chloroplast. It is found in the amyloplast. The protein localises to the cytoplasm. The protein resides in the cytosol. The enzyme catalyses alpha-D-glucose 1-phosphate + ATP + H(+) = ADP-alpha-D-glucose + diphosphate. It functions in the pathway glycan biosynthesis; starch biosynthesis. Activated by 3'phosphoglycerate, inhibited by orthophosphate. Allosteric regulation. Inhibited by inorganic phosphate (Pi). In terms of biological role, involved in synthesis of starch. Catalyzes the synthesis of ADP-glucose, a molecule that serves as an activated glycosyl donor for alpha-1,4-glucan synthesis. The chloroplastic isoform 1 is essential for starch synthesis in leaf chloroplasts and the cytosolic isoform 2 for synthesis in seed endosperm. In Oryza sativa subsp. japonica (Rice), this protein is Glucose-1-phosphate adenylyltransferase small subunit 2, chloroplastic/amyloplastic/cytosolic.